Here is a 338-residue protein sequence, read N- to C-terminus: Ketol-acid reductoisomerase (NADP(+)) (338 aa).

Residues 1 to 181 (MQVYYDKDAD…GGGRAGVIET (181 aa)) enclose the KARI N-terminal Rossmann domain. NADP(+) is bound by residues 24–27 (YGSQ), arginine 47, serine 50, serine 52, and 82–85 (DEHQ). Histidine 107 is an active-site residue. Glycine 133 is an NADP(+) binding site. In terms of domain architecture, KARI C-terminal knotted spans 182–327 (SFREETETDL…ERLRGMMPWI (146 aa)). 4 residues coordinate Mg(2+): aspartate 190, glutamate 194, glutamate 226, and glutamate 230. Serine 251 serves as a coordination point for substrate.

It belongs to the ketol-acid reductoisomerase family. It depends on Mg(2+) as a cofactor.

It carries out the reaction (2R)-2,3-dihydroxy-3-methylbutanoate + NADP(+) = (2S)-2-acetolactate + NADPH + H(+). It catalyses the reaction (2R,3R)-2,3-dihydroxy-3-methylpentanoate + NADP(+) = (S)-2-ethyl-2-hydroxy-3-oxobutanoate + NADPH + H(+). It functions in the pathway amino-acid biosynthesis; L-isoleucine biosynthesis; L-isoleucine from 2-oxobutanoate: step 2/4. It participates in amino-acid biosynthesis; L-valine biosynthesis; L-valine from pyruvate: step 2/4. Its function is as follows. Involved in the biosynthesis of branched-chain amino acids (BCAA). Catalyzes an alkyl-migration followed by a ketol-acid reduction of (S)-2-acetolactate (S2AL) to yield (R)-2,3-dihydroxy-isovalerate. In the isomerase reaction, S2AL is rearranged via a Mg-dependent methyl migration to produce 3-hydroxy-3-methyl-2-ketobutyrate (HMKB). In the reductase reaction, this 2-ketoacid undergoes a metal-dependent reduction by NADPH to yield (R)-2,3-dihydroxy-isovalerate. In Alkalilimnicola ehrlichii (strain ATCC BAA-1101 / DSM 17681 / MLHE-1), this protein is Ketol-acid reductoisomerase (NADP(+)).